A 360-amino-acid polypeptide reads, in one-letter code: POU domain, class 5, transcription factor 1 (360 aa).

2 disordered regions span residues 1–52 (MAGH…PGVG) and 88–114 (GGLETSQPEGEAGVGVESNSDGASPEP). The short motif at 4-12 (HLASDFAFS) is the 9aaTAD element. A Phosphoserine; by MAPK modification is found at Ser111. Lys123 is covalently cross-linked (Glycyl lysine isopeptide (Lys-Gly) (interchain with G-Cter in SUMO)). In terms of domain architecture, POU-specific spans 138 to 212 (DIKALQKELE…LLQKWVEEAD (75 aa)). DNA-binding residues include Arg157 and Gln164. 2 DNA-binding regions span residues 180–186 (SQTTICR) and 193–196 (SFKN). A DNA-binding region (homeobox) is located at residues 230–289 (RKRKRTSIENRVRGNLENLFLQCPKPTLQQISHIAQQLGLEKDVVRVWFCNRRQKGKRSS). Thr235 bears the Phosphothreonine mark. Ser236, Ser289, Ser290, and Ser355 each carry phosphoserine.

This sequence belongs to the POU transcription factor family. Class-5 subfamily. As to quaternary structure, interacts with PKM. Interacts with WWP2. Interacts with UBE2I and ZSCAN10. Interacts with PCGF1. Interacts with ESRRB; recruits ESRRB near the POU5F1-SOX2 element in the NANOG proximal promoter; the interaction is DNA independent. Interacts with ZNF322. Interacts with MAPK8 and MAPK9; the interaction allows MAPK8 and MAPK9 to phosphorylate POU5F1 on Ser-355. Interacts (when phosphorylated on Ser-355) with FBXW8. Interacts with FBXW4. Interacts with SOX2 and SOX15; binds synergistically with either SOX2 or SOX15 to DNA. Interacts with DDX56. In terms of processing, sumoylation enhances the protein stability, DNA binding and transactivation activity. Sumoylation is required for enhanced YES1 expression. Ubiquitinated; undergoes 'Lys-63'-linked polyubiquitination by WWP2 leading to proteasomal degradation. Post-translationally, ERK1/2-mediated phosphorylation at Ser-111 promotes nuclear exclusion and proteasomal degradation. Phosphorylation at Thr-235 and Ser-236 decrease DNA-binding and alters ability to activate transcription. As to expression, expressed in developing brain. Highest levels found in specific cell layers of the cortex, the olfactory bulb, the hippocampus and the cerebellum. Low levels of expression in adult tissues.

The protein resides in the cytoplasm. The protein localises to the nucleus. Transcription factor that binds to the octamer motif (5'-ATTTGCAT-3'). Forms a trimeric complex with SOX2 or SOX15 on DNA and controls the expression of a number of genes involved in embryonic development such as YES1, FGF4, UTF1 and ZFP206. Critical for early embryogenesis and for embryonic stem cell pluripotency. This is POU domain, class 5, transcription factor 1 (POU5F1) from Homo sapiens (Human).